A 208-amino-acid chain; its full sequence is uncharacterized protein (208 aa).

2 disordered regions span residues Phe-74–Pro-117 and Glu-181–Lys-208. A compositionally biased stretch (polar residues) spans Leu-184–Lys-208.

This is an uncharacterized protein from Mus musculus (Mouse).